The chain runs to 752 residues: BCLAF1 and THRAP3 family member 3 (752 aa).

The span at 1 to 13 (MARSRSRSPRWKQ) shows a compositional bias: basic residues. 3 disordered regions span residues 1 to 114 (MARS…YMPT), 132 to 177 (PTVQ…QMSL), and 190 to 252 (DELR…DPAR). Phosphoserine is present on residues Ser-15 and Ser-17. A compositionally biased stretch (basic and acidic residues) spans 23 to 57 (FEYHEERHFHGHYDPEYRHDQQRPFTWRMDDEKHG). A phosphoserine mark is found at Ser-78 and Ser-80. Basic and acidic residues predominate over residues 85–109 (PVEKFDTYKPHQEYFPGRGDDDRRS). Basic and acidic residues predominate over residues 190–199 (DELRHQRVQE). At Ser-205 the chain carries Phosphoserine. Basic and acidic residues-rich tracts occupy residues 222 to 231 (RYPEDHDFRK) and 238 to 252 (RPTDAARYENRDPAR). Residue Lys-416 forms a Glycyl lysine isopeptide (Lys-Gly) (interchain with G-Cter in SUMO2) linkage. Residue Ser-592 is modified to Phosphoserine.

Belongs to the BCLAF1/THRAP3 family.

The protein localises to the mitochondrion. This is BCLAF1 and THRAP3 family member 3 from Mus musculus (Mouse).